A 146-amino-acid chain; its full sequence is Hemoglobin subunit beta (146 aa).

At Val-1 the chain carries N-acetylvaline. Residues 2–146 (HLTPEEKTAV…VANALAHKYH (145 aa)) form the Globin domain. Thr-12 is modified (phosphothreonine). The residue at position 44 (Ser-44) is a Phosphoserine. Position 59 is an N6-acetyllysine (Lys-59). A heme b-binding site is contributed by His-63. At Lys-82 the chain carries N6-acetyllysine. His-92 lines the heme b pocket. At Cys-93 the chain carries S-nitrosocysteine. Lys-144 carries the N6-acetyllysine modification.

The protein belongs to the globin family. As to quaternary structure, heterotetramer of two alpha chains and two beta chains. Red blood cells.

In terms of biological role, involved in oxygen transport from the lung to the various peripheral tissues. In Chlorocebus aethiops (Green monkey), this protein is Hemoglobin subunit beta (HBB).